Consider the following 895-residue polypeptide: MNISVIGTGYVGLIQAVGLAEFGFDVVGIDIDESKVKALNRGECPLYEEGLEGLLKKHVNKNLTFTTSYKPIKDSDVIFLCVGTPQDKDGNADLRFLFSAVEKIKETIDKEDYKVIVIKSTVPVGTNRRVKELLKDYNVDVVSNPEFLREGIAVYDFFNPERVILGFENLNNKKPIEIMEEVYKYFKDKNIPFVITNWETAELIKYASNAFLATKISFINELAKLSDKVKADIKTISYAMGLDPRIGNKFLNAGIGYGGSCFHPDEVLFIDRGRGLECITFKELFELEDKDNVKILSFDGEKLSLKKLKLASKRYYNDDLITLRFNLGREIKITKDHPVVILEDGELKIKLTSDVKEGDKVILPYGNFGEEREIEIDILEELSKTDLIEKVWIHNKDLATNEFNIIKPYLSNKYPHDVKRNGTIRAKDILPIKEILDKYGSKNRLFTAKSKSTTIPYKIKIDKDFARLIGYYLSEGWISKDYGRNGVVRKRIGLCFGIHEEEYINDVKNILNKLGIKYIEKIKDGSHSILISSKILAYVFENILNCGINCYNKNIPPQMFNAKEEIKWEFLKGLFRGDGGIVRLNNNKNLNIEFATVSKKMAHSLLILLQLLGIVASVKKCYNNKSTTMAYIIRINGLEQVKKIGELFGKKWENYKDIAESYKRNIEPLGYKKSDNFAILEVKEIIKEHYSGYVYSVETENSLLITSYGILIHNCFPKDVKALIKQFENNNIEPILIKATDIVNEEQIKWFFEKIKNYYGNLNGKTFAVLGLAFKPNTDDLRESRAIKLIDMLLESGAIVKGFDYVEKARENTINMYKLDKSKGFYGYNLYVLDDLYETVKNVDGIIITVEYDFNKEDWEKIGNLVKEKVVFDGRNILDVEKIKKLGFKYYGVGR.

2-19 provides a ligand contact to NAD(+); it reads NISVIGTGYVGLIQAVGL. Cysteine 261 is a catalytic residue. In terms of domain architecture, DOD-type homing endonuclease spans 468 to 614; that stretch reads LIGYYLSEGW…LLILLQLLGI (147 aa).

Belongs to the UDP-glucose/GDP-mannose dehydrogenase family. This protein undergoes a protein self splicing that involves a post-translational excision of the intervening region (intein) followed by peptide ligation.

This is an uncharacterized protein from Methanocaldococcus jannaschii (strain ATCC 43067 / DSM 2661 / JAL-1 / JCM 10045 / NBRC 100440) (Methanococcus jannaschii).